Consider the following 361-residue polypeptide: GTP 3',8-cyclase (361 aa).

The tract at residues 1–30 is disordered; that stretch reads MTVTALGLPTVARSTGDGSAGASPAPADGP. Over residues 16–30 the composition is skewed to low complexity; that stretch reads GDGSAGASPAPADGP. Positions 34–252 constitute a Radical SAM core domain; sequence TYGRAATDLR…LQQHFELTPD (219 aa). Residue Arg43 participates in GTP binding. Positions 50 and 54 each coordinate [4Fe-4S] cluster. Tyr56 contributes to the S-adenosyl-L-methionine binding site. Cys57 contacts [4Fe-4S] cluster. Residue Arg94 coordinates GTP. S-adenosyl-L-methionine is bound at residue Gly98. Thr125 is a GTP binding site. Residue Ser149 coordinates S-adenosyl-L-methionine. Lys186 contributes to the GTP binding site. Met220 lines the S-adenosyl-L-methionine pocket. [4Fe-4S] cluster is bound by residues Cys288 and Cys291. 293–295 serves as a coordination point for GTP; sequence RTR. Cys305 serves as a coordination point for [4Fe-4S] cluster.

The protein belongs to the radical SAM superfamily. MoaA family. As to quaternary structure, monomer and homodimer. Requires [4Fe-4S] cluster as cofactor.

The catalysed reaction is GTP + AH2 + S-adenosyl-L-methionine = (8S)-3',8-cyclo-7,8-dihydroguanosine 5'-triphosphate + 5'-deoxyadenosine + L-methionine + A + H(+). It participates in cofactor biosynthesis; molybdopterin biosynthesis. Functionally, catalyzes the cyclization of GTP to (8S)-3',8-cyclo-7,8-dihydroguanosine 5'-triphosphate. This is GTP 3',8-cyclase from Mycolicibacterium smegmatis (strain ATCC 700084 / mc(2)155) (Mycobacterium smegmatis).